A 398-amino-acid polypeptide reads, in one-letter code: Putative tyrosine-protein phosphatase C15H7.3 (398 aa).

Residues methionine 1–serine 15 are compositionally biased toward basic residues. A disordered region spans residues methionine 1–lysine 114. Over residues glycine 18–glutamine 40 the composition is skewed to basic and acidic residues. The segment covering lysine 41–glycine 50 has biased composition (basic residues). Polar residues predominate over residues glycine 55–threonine 73. The span at threonine 74–lysine 114 shows a compositional bias: basic and acidic residues. The Tyrosine-protein phosphatase domain occupies threonine 125–tryptophan 376.

It belongs to the protein-tyrosine phosphatase family. Non-receptor class subfamily.

It catalyses the reaction O-phospho-L-tyrosyl-[protein] + H2O = L-tyrosyl-[protein] + phosphate. The sequence is that of Putative tyrosine-protein phosphatase C15H7.3 from Caenorhabditis elegans.